The sequence spans 252 residues: Imidazole glycerol phosphate synthase subunit HisF (252 aa).

Residues D11 and D130 contribute to the active site.

It belongs to the HisA/HisF family. Heterodimer of HisH and HisF.

The protein resides in the cytoplasm. It carries out the reaction 5-[(5-phospho-1-deoxy-D-ribulos-1-ylimino)methylamino]-1-(5-phospho-beta-D-ribosyl)imidazole-4-carboxamide + L-glutamine = D-erythro-1-(imidazol-4-yl)glycerol 3-phosphate + 5-amino-1-(5-phospho-beta-D-ribosyl)imidazole-4-carboxamide + L-glutamate + H(+). It participates in amino-acid biosynthesis; L-histidine biosynthesis; L-histidine from 5-phospho-alpha-D-ribose 1-diphosphate: step 5/9. In terms of biological role, IGPS catalyzes the conversion of PRFAR and glutamine to IGP, AICAR and glutamate. The HisF subunit catalyzes the cyclization activity that produces IGP and AICAR from PRFAR using the ammonia provided by the HisH subunit. The sequence is that of Imidazole glycerol phosphate synthase subunit HisF from Geobacillus kaustophilus (strain HTA426).